The chain runs to 83 residues: Small ribosomal subunit protein bS20 (83 aa).

It belongs to the bacterial ribosomal protein bS20 family.

In terms of biological role, binds directly to 16S ribosomal RNA. In Amoebophilus asiaticus (strain 5a2), this protein is Small ribosomal subunit protein bS20.